A 2566-amino-acid chain; its full sequence is Zinc finger protein GLI1 (2566 aa).

3 disordered regions span residues 349 to 375, 430 to 508, and 985 to 1046; these read HHSS…SQSS, DIRR…RSTG, and KSIE…GDPD. Polar residues-rich tracts occupy residues 434–444 and 457–492; these read TLSSNGNSSHT and WSPN…YQQH. The segment covering 493–508 has biased composition (low complexity); the sequence is SGYTSTSGSSGNRSTG. Residues 993 to 1016 are compositionally biased toward polar residues; that stretch reads WQNQNVFSSRRNSTRDPSNNNNSG. Residues 1023–1035 are compositionally biased toward acidic residues; that stretch reads DEPDVDDDEELDD. The C2H2-type 1; degenerate zinc finger occupies 1088–1110; it reads RECVRGTRPFKAQYMLVVHMRRH. C2H2-type zinc fingers lie at residues 1116 to 1140, 1146 to 1171, and 1177 to 1202; these read HKCI…LRSH, YQCE…NRTH, and YTCK…KTVH. 5 disordered regions span residues 1254-1313, 1465-1491, 1650-1677, 1727-1791, and 2067-2091; these read GNSN…PRDS, LSTT…TKQK, SKNM…NQNE, AAAS…MDND, and MHFS…NRPH. Low complexity-rich tracts occupy residues 1661–1677 and 1727–1743; these read NNNE…NQNE and AAAS…TTAS. The span at 1752-1769 shows a compositional bias: basic residues; sequence NHHHQKQQPKHSHQHQNR. Polar residues predominate over residues 1770–1791; it reads TKSINSDNNYSNQDNVSTMDND. Residues 2070 to 2090 are compositionally biased toward low complexity; it reads SPHSYVHSSSSNSSPFNSNRP.

The protein belongs to the GLI C2H2-type zinc-finger protein family. As to expression, expressed in female-paired or unpaired males along the ventral surface in neurons and skin tegument cells. In virgin and mature females, expressed bilaterally along the edges of the body in neurons. In mature females, also expressed in skin tegument cells.

The protein localises to the nucleus. Functionally, probable transcription factor which plays an essential role in males to trigger female sexual development by inducing NRPS expression in male. NRPS produces the pheromone beta-alanyl-tryptamine (BATT), which stimulates female sexual development. The polypeptide is Zinc finger protein GLI1 (Schistosoma mansoni (Blood fluke)).